The following is a 34-amino-acid chain: Small ribosomal subunit protein uS2c (34 aa).

Belongs to the universal ribosomal protein uS2 family.

The protein localises to the plastid. It localises to the chloroplast. This chain is Small ribosomal subunit protein uS2c (rps2), found in Ochrosphaera neapolitana.